Consider the following 207-residue polypeptide: Large ribosomal subunit protein uL4 (207 aa).

Residues 54 to 74 (RSDVRGGGKKPYRQKGTGNAR) are disordered.

Belongs to the universal ribosomal protein uL4 family. Part of the 50S ribosomal subunit.

Its function is as follows. One of the primary rRNA binding proteins, this protein initially binds near the 5'-end of the 23S rRNA. It is important during the early stages of 50S assembly. It makes multiple contacts with different domains of the 23S rRNA in the assembled 50S subunit and ribosome. Forms part of the polypeptide exit tunnel. The chain is Large ribosomal subunit protein uL4 from Magnetococcus marinus (strain ATCC BAA-1437 / JCM 17883 / MC-1).